The primary structure comprises 259 residues: Aliphatic sulfonates import ATP-binding protein SsuB 2 (259 aa).

The ABC transporter domain maps to 17–238; it reads LDILGLWKGF…VRSSQAFTSI (222 aa). 49-56 contacts ATP; that stretch reads GRSGCGKS.

Belongs to the ABC transporter superfamily. Aliphatic sulfonates importer (TC 3.A.1.17.2) family. In terms of assembly, the complex is composed of two ATP-binding proteins (SsuB), two transmembrane proteins (SsuC) and a solute-binding protein (SsuA).

It is found in the cell inner membrane. The catalysed reaction is ATP + H2O + aliphatic sulfonate-[sulfonate-binding protein]Side 1 = ADP + phosphate + aliphatic sulfonateSide 2 + [sulfonate-binding protein]Side 1.. Its function is as follows. Part of the ABC transporter complex SsuABC involved in aliphatic sulfonates import. Responsible for energy coupling to the transport system. This chain is Aliphatic sulfonates import ATP-binding protein SsuB 2, found in Agrobacterium fabrum (strain C58 / ATCC 33970) (Agrobacterium tumefaciens (strain C58)).